Reading from the N-terminus, the 426-residue chain is D-tagatose-1,6-bisphosphate aldolase subunit KbaZ (426 aa).

It belongs to the GatZ/KbaZ family. KbaZ subfamily. Forms a complex with KbaY.

The protein operates within carbohydrate metabolism; D-tagatose 6-phosphate degradation; D-glyceraldehyde 3-phosphate and glycerone phosphate from D-tagatose 6-phosphate: step 2/2. Component of the tagatose-1,6-bisphosphate aldolase KbaYZ that is required for full activity and stability of the Y subunit. Could have a chaperone-like function for the proper and stable folding of KbaY. When expressed alone, KbaZ does not show any aldolase activity. The sequence is that of D-tagatose-1,6-bisphosphate aldolase subunit KbaZ from Escherichia coli O157:H7.